The chain runs to 288 residues: Bifunctional protein FolD (288 aa).

NADP(+) is bound by residues 166 to 168 (GRS), Ser191, and Ile232.

It belongs to the tetrahydrofolate dehydrogenase/cyclohydrolase family. As to quaternary structure, homodimer.

The enzyme catalyses (6R)-5,10-methylene-5,6,7,8-tetrahydrofolate + NADP(+) = (6R)-5,10-methenyltetrahydrofolate + NADPH. It catalyses the reaction (6R)-5,10-methenyltetrahydrofolate + H2O = (6R)-10-formyltetrahydrofolate + H(+). It participates in one-carbon metabolism; tetrahydrofolate interconversion. Functionally, catalyzes the oxidation of 5,10-methylenetetrahydrofolate to 5,10-methenyltetrahydrofolate and then the hydrolysis of 5,10-methenyltetrahydrofolate to 10-formyltetrahydrofolate. This chain is Bifunctional protein FolD, found in Rickettsia massiliae (strain Mtu5).